We begin with the raw amino-acid sequence, 208 residues long: Uracil phosphoribosyltransferase (208 aa).

Residues Arg-78, Arg-103, and 130-138 (DPMLATGGS) contribute to the 5-phospho-alpha-D-ribose 1-diphosphate site. Residues Ile-193 and 198–200 (GDA) each bind uracil. Residue Asp-199 participates in 5-phospho-alpha-D-ribose 1-diphosphate binding.

Belongs to the UPRTase family. Requires Mg(2+) as cofactor.

It carries out the reaction UMP + diphosphate = 5-phospho-alpha-D-ribose 1-diphosphate + uracil. It functions in the pathway pyrimidine metabolism; UMP biosynthesis via salvage pathway; UMP from uracil: step 1/1. Allosterically activated by GTP. Catalyzes the conversion of uracil and 5-phospho-alpha-D-ribose 1-diphosphate (PRPP) to UMP and diphosphate. The protein is Uracil phosphoribosyltransferase of Pasteurella multocida (strain Pm70).